A 334-amino-acid polypeptide reads, in one-letter code: B1 bradykinin receptor (334 aa).

The interval 1 to 21 (MASQASLKLQPSNQSQQAPPN) is disordered. Over 1 to 41 (MASQASLKLQPSNQSQQAPPNITSCEGAPEAWDLLCRVLPG) the chain is Extracellular. A compositionally biased stretch (low complexity) spans 10–21 (QPSNQSQQAPPN). 2 N-linked (GlcNAc...) asparagine glycosylation sites follow: Asn-13 and Asn-21. Residues 42 to 62 (FVITVCFFGLLGNLLVLSFFL) form a helical membrane-spanning segment. Topologically, residues 63–80 (LPWRRWWQQRRQRLTIAE) are cytoplasmic. The helical transmembrane segment at 81–101 (IYLANLAASDLVFVLGLPFWA) threads the bilayer. Residues 102 to 118 (ENVGNRFNWPFGSDLCR) lie on the Extracellular side of the membrane. Cys-117 and Cys-196 are joined by a disulfide. Residues 119-139 (VVSGVIKANLFISIFLVVAIS) form a helical membrane-spanning segment. Residues 140 to 161 (QDRYRLLVYPMTSWGNRRRRQA) are Cytoplasmic-facing. A helical transmembrane segment spans residues 162-182 (QVTCLLIWVAGGLLSTPTFLL). At 183–214 (RSVKVVPDLNISACILLFPHEAWHFVRMVELN) the chain is on the extracellular side. The N-linked (GlcNAc...) asparagine glycan is linked to Asn-192. A helical membrane pass occupies residues 215-235 (VLGFLLPLAAILYFNFHILAS). Residues 236-258 (LRGQKEASRTRCGGPKDSKTMGL) lie on the Cytoplasmic side of the membrane. Residues 259–279 (ILTLVASFLVCWAPYHFFAFL) form a helical membrane-spanning segment. Residues 280 to 302 (DFLVQVRVIQDCFWKELTDLGLQ) lie on the Extracellular side of the membrane. The chain crosses the membrane as a helical span at residues 303-323 (LANFFAFVNSCLNPLIYVFAG). Residues 324 to 334 (RLFKTRVLGTL) are Cytoplasmic-facing.

This sequence belongs to the G-protein coupled receptor 1 family. Bradykinin receptor subfamily. BDKRB1 sub-subfamily. Expressed in heart, liver and lung.

It localises to the cell membrane. This is a receptor for bradykinin. Could be a factor in chronic pain and inflammation. The sequence is that of B1 bradykinin receptor (Bdkrb1) from Mus musculus (Mouse).